The following is a 322-amino-acid chain: Chemokine XC receptor 1 (322 aa).

Over 1–27 (MESSTAFYDYHDKLSLLCENNVIFFST) the chain is Extracellular. Residues 28-55 (ISTIVLYSLVFLLSLVGNSLVLWVLVKY) form a helical membrane-spanning segment. The Cytoplasmic segment spans residues 56–65 (ENLESLTNIF). Residues 66–85 (ILNLCLSDLMFSCLLPVLIS) form a helical membrane-spanning segment. At 86–98 (AQWSWFLGDFFCK) the chain is on the extracellular side. C97 and C170 are oxidised to a cystine. A helical membrane pass occupies residues 99–120 (FFNMIFGISLYSSIFFLTIMTI). Topologically, residues 121-137 (HRYLSVVSPISTLGIHT) are cytoplasmic. The helical transmembrane segment at 138–162 (LRCRVLVTSCVWAASILFSIPDAVF) threads the bilayer. At 163-185 (HKVISLNCKYSEHHGFLASVYQH) the chain is on the extracellular side. A helical transmembrane segment spans residues 186 to 204 (NIFFLLSMGIILFCYVQIL). At 205 to 220 (RTLFRTRSRQRHRTVR) the chain is on the cytoplasmic side. The helical transmembrane segment at 221 to 243 (LIFTVVVAYFLSWAPYNLTLFLK) threads the bilayer. Over 244–259 (TGIIQQSCESLQQLDI) the chain is Extracellular. A helical transmembrane segment spans residues 260–283 (AMIICRHLAFSHCCFNPVLYVFVG). The Cytoplasmic portion of the chain corresponds to 284-322 (IKFRRHLKHLFQQVWLCRKTSSTVPCSPGTFTYEGPSFY).

The protein belongs to the G-protein coupled receptor 1 family. As to expression, expressed by dendritic cells from the thymus, slpeen, subcutaneous lymph nodes and mesenteric lymph nodes.

It is found in the cell membrane. Functionally, receptor for chemokines SCYC1 and SCYC2. Subsequently transduces a signal by increasing the intracellular calcium ions level. Receptor for XCL1/Lymphotactin. This chain is Chemokine XC receptor 1 (Xcr1), found in Mus musculus (Mouse).